Here is a 75-residue protein sequence, read N- to C-terminus: Exodeoxyribonuclease 7 small subunit (75 aa).

This sequence belongs to the XseB family. In terms of assembly, heterooligomer composed of large and small subunits.

It is found in the cytoplasm. The catalysed reaction is Exonucleolytic cleavage in either 5'- to 3'- or 3'- to 5'-direction to yield nucleoside 5'-phosphates.. Its function is as follows. Bidirectionally degrades single-stranded DNA into large acid-insoluble oligonucleotides, which are then degraded further into small acid-soluble oligonucleotides. This is Exodeoxyribonuclease 7 small subunit from Elusimicrobium minutum (strain Pei191).